Here is a 127-residue protein sequence, read N- to C-terminus: DNA-directed RNA polymerase subunit omega (127 aa).

Belongs to the RNA polymerase subunit omega family. In terms of assembly, the RNAP catalytic core consists of 2 alpha, 1 beta, 1 beta' and 1 omega subunit. When a sigma factor is associated with the core the holoenzyme is formed, which can initiate transcription.

It catalyses the reaction RNA(n) + a ribonucleoside 5'-triphosphate = RNA(n+1) + diphosphate. Functionally, promotes RNA polymerase assembly. Latches the N- and C-terminal regions of the beta' subunit thereby facilitating its interaction with the beta and alpha subunits. In Rickettsia typhi (strain ATCC VR-144 / Wilmington), this protein is DNA-directed RNA polymerase subunit omega.